The sequence spans 735 residues: Capsid protein (735 aa).

Disordered regions lie at residues 577–604 (VVRN…DPKY) and 632–695 (QQAS…TVEQ). A compositionally biased stretch (basic and acidic residues) spans 649 to 666 (EIKGLTEADQEAEKDSGL). Residues 676 to 685 (SSQETQSEQE) are compositionally biased toward low complexity.

Belongs to the anelloviridae capsid protein family.

It is found in the virion. In terms of biological role, self assemble to form an icosahedral capsid. The chain is Capsid protein from Pan troglodytes (Chimpanzee).